The sequence spans 85 residues: Putative regulatory protein DICTH_1339 (85 aa).

This sequence belongs to the RemA family.

The sequence is that of Putative regulatory protein DICTH_1339 from Dictyoglomus thermophilum (strain ATCC 35947 / DSM 3960 / H-6-12).